The sequence spans 23 residues: Coenzyme PQQ synthesis protein A (23 aa).

Positions 15–19 (EVTLY) form a cross-link, pyrroloquinoline quinone (Glu-Tyr).

Belongs to the PqqA family.

It functions in the pathway cofactor biosynthesis; pyrroloquinoline quinone biosynthesis. Required for coenzyme pyrroloquinoline quinone (PQQ) biosynthesis. PQQ is probably formed by cross-linking a specific glutamate to a specific tyrosine residue and excising these residues from the peptide. The protein is Coenzyme PQQ synthesis protein A of Colwellia psychrerythraea (strain 34H / ATCC BAA-681) (Vibrio psychroerythus).